The primary structure comprises 103 residues: MQNQRIRIRLKAFDHRLIDQATAEIVETAKRTGAQVRGPIPLPTRKERFTVLISPHVNKDARDQYEIRTHLRLVDIVEPTEKTVDALMRLDLAAGVDVQISLG.

This sequence belongs to the universal ribosomal protein uS10 family. In terms of assembly, part of the 30S ribosomal subunit.

Functionally, involved in the binding of tRNA to the ribosomes. The protein is Small ribosomal subunit protein uS10 of Escherichia coli O127:H6 (strain E2348/69 / EPEC).